Here is a 602-residue protein sequence, read N- to C-terminus: UPF0329 protein ECU02_0060 (602 aa).

The segment covering E313–S345 has biased composition (basic and acidic residues). Residues E313–E407 are disordered. Residues K346–K356 show a composition bias toward basic residues. Basic and acidic residues predominate over residues G357 to D369. The segment covering R370–V384 has biased composition (acidic residues).

Belongs to the UPF0329 family.

The polypeptide is UPF0329 protein ECU02_0060 (Encephalitozoon cuniculi (strain GB-M1) (Microsporidian parasite)).